A 390-amino-acid chain; its full sequence is DNA polymerase IV (390 aa).

In terms of domain architecture, UmuC spans 6–187; that stretch reads VMHVDLDAFF…LDIAVMPGIG (182 aa). Positions 10 and 105 each coordinate Mg(2+). Glu-106 is an active-site residue.

This sequence belongs to the DNA polymerase type-Y family. As to quaternary structure, monomer. Requires Mg(2+) as cofactor.

It is found in the cytoplasm. The catalysed reaction is DNA(n) + a 2'-deoxyribonucleoside 5'-triphosphate = DNA(n+1) + diphosphate. Its function is as follows. Poorly processive, error-prone DNA polymerase involved in untargeted mutagenesis. Copies undamaged DNA at stalled replication forks, which arise in vivo from mismatched or misaligned primer ends. These misaligned primers can be extended by PolIV. Exhibits no 3'-5' exonuclease (proofreading) activity. May be involved in translesional synthesis, in conjunction with the beta clamp from PolIII. This is DNA polymerase IV from Dehalococcoides mccartyi (strain ATCC BAA-2100 / JCM 16839 / KCTC 5957 / BAV1).